Consider the following 233-residue polypeptide: Large ribosomal subunit protein uL1 (233 aa).

It belongs to the universal ribosomal protein uL1 family. As to quaternary structure, part of the 50S ribosomal subunit.

In terms of biological role, binds directly to 23S rRNA. The L1 stalk is quite mobile in the ribosome, and is involved in E site tRNA release. Functionally, protein L1 is also a translational repressor protein, it controls the translation of the L11 operon by binding to its mRNA. In Shewanella oneidensis (strain ATCC 700550 / JCM 31522 / CIP 106686 / LMG 19005 / NCIMB 14063 / MR-1), this protein is Large ribosomal subunit protein uL1.